Consider the following 311-residue polypeptide: Oligopeptide transport system permease protein OppC (311 aa).

Topologically, residues 1 to 48 are cytoplasmic; the sequence is MTDYRTQPINQKNADFVEQVADRIEEMQLEGRSLWQDAKRRFFRNKAA. The helical transmembrane segment at 49–69 threads the bilayer; sequence VASLIILAFIIIFITVAPWFF. Residues 70-113 lie on the Periplasmic side of the membrane; it reads PFTYEDTDWNMMSAAPTMEGYHFFGTDASGRDLLVRTAIGGRIS. The ABC transmembrane type-1 domain maps to 110–299; that stretch reads GRISLLVGIA…LTLFCFNFIG (190 aa). Residues 114–134 form a helical membrane-spanning segment; it reads LLVGIAGAFISVTIGTIYGAI. Residues 135-146 are Cytoplasmic-facing; it reads SGYVGGKTDMLM. Residues 147–169 form a helical membrane-spanning segment; it reads MRFLEILSSFPFMFFVILLVTLF. Topologically, residues 170–172 are periplasmic; the sequence is GQN. A helical transmembrane segment spans residues 173 to 192; sequence IFLIFIAIGAIAWLGLARIV. The Cytoplasmic portion of the chain corresponds to 193–222; that stretch reads RGQTLSLKNKEFVEAAIVCGVPRRQIILKH. Residues 223 to 243 form a helical membrane-spanning segment; that stretch reads IIPNVLGLVAVYASLEVPGLI. The Periplasmic portion of the chain corresponds to 244–278; the sequence is LFESFLSFLGLGTQEPMSSWGALLSDGAAQMEVSP. Residues 279–299 form a helical membrane-spanning segment; sequence WLLIFPAFFLCLTLFCFNFIG. The Cytoplasmic segment spans residues 300–311; the sequence is DGLRDALDPKDR.

Belongs to the binding-protein-dependent transport system permease family. OppBC subfamily. As to quaternary structure, the complex is composed of two ATP-binding proteins (OppD and OppF), two transmembrane proteins (OppB and OppC) and a solute-binding protein (OppA).

The protein resides in the cell inner membrane. In terms of biological role, part of the ABC transporter complex OppABCDF involved in the uptake of oligopeptides. Probably responsible for the translocation of the substrate across the membrane. This Haemophilus influenzae (strain ATCC 51907 / DSM 11121 / KW20 / Rd) protein is Oligopeptide transport system permease protein OppC (oppC).